A 429-amino-acid chain; its full sequence is Chaperone SurA (429 aa).

The signal sequence occupies residues 1-18 (MFKRIALVCALFSGVCFA). 2 PpiC domains span residues 170 to 271 (NLTY…KLVA) and 281 to 380 (ITQT…EVIA).

It is found in the periplasm. It carries out the reaction [protein]-peptidylproline (omega=180) = [protein]-peptidylproline (omega=0). Its function is as follows. Chaperone involved in the correct folding and assembly of outer membrane proteins. Recognizes specific patterns of aromatic residues and the orientation of their side chains, which are found more frequently in integral outer membrane proteins. May act in both early periplasmic and late outer membrane-associated steps of protein maturation. In Legionella pneumophila (strain Lens), this protein is Chaperone SurA.